The sequence spans 652 residues: Putative asparagine synthetase [glutamine-hydrolyzing] (652 aa).

Residue C2 is the For GATase activity of the active site. Residues 2–231 (CGLLAFVAAP…SGCFARIRAD (230 aa)) form the Glutamine amidotransferase type-2 domain. L-glutamine contacts are provided by residues 60-64 (RLSII), 89-91 (NGE), and D115. 382 to 383 (SG) provides a ligand contact to ATP.

The protein belongs to the asparagine synthetase family.

It carries out the reaction L-aspartate + L-glutamine + ATP + H2O = L-asparagine + L-glutamate + AMP + diphosphate + H(+). Its pathway is amino-acid biosynthesis; L-asparagine biosynthesis; L-asparagine from L-aspartate (L-Gln route): step 1/1. The sequence is that of Putative asparagine synthetase [glutamine-hydrolyzing] (asnB) from Mycobacterium bovis (strain ATCC BAA-935 / AF2122/97).